The sequence spans 618 residues: DNA mismatch repair protein MutL (618 aa).

Low complexity predominate over residues 367-381 (EPTAAREPATPRYSG). The segment at 367 to 402 (EPTAAREPATPRYSGGASGGNGGRQSAGGWPHAQPG) is disordered. Positions 382–392 (GASGGNGGRQS) are enriched in gly residues.

Belongs to the DNA mismatch repair MutL/HexB family.

Its function is as follows. This protein is involved in the repair of mismatches in DNA. It is required for dam-dependent methyl-directed DNA mismatch repair. May act as a 'molecular matchmaker', a protein that promotes the formation of a stable complex between two or more DNA-binding proteins in an ATP-dependent manner without itself being part of a final effector complex. The sequence is that of DNA mismatch repair protein MutL from Salmonella gallinarum (strain 287/91 / NCTC 13346).